Consider the following 504-residue polypeptide: ATP synthase subunit alpha, chloroplastic (504 aa).

170–177 (GDRQTGKT) lines the ATP pocket.

It belongs to the ATPase alpha/beta chains family. F-type ATPases have 2 components, CF(1) - the catalytic core - and CF(0) - the membrane proton channel. CF(1) has five subunits: alpha(3), beta(3), gamma(1), delta(1), epsilon(1). CF(0) has four main subunits: a, b, b' and c.

It is found in the plastid. The protein localises to the chloroplast thylakoid membrane. It carries out the reaction ATP + H2O + 4 H(+)(in) = ADP + phosphate + 5 H(+)(out). Produces ATP from ADP in the presence of a proton gradient across the membrane. The alpha chain is a regulatory subunit. The sequence is that of ATP synthase subunit alpha, chloroplastic from Hordeum vulgare (Barley).